We begin with the raw amino-acid sequence, 597 residues long: MSSKGSSTDGRTDLANGSLSSSPEEMSGAEEGRETSSGIEVEASDLSLSLTGDDGGPNRTSTESRGTDTESSGEDKDSDSMEDTGHYSINDENRVHDRSEEEEEEEEEEEEEQPRRRVQRKRANRDQDSSDDERALEDWVSSETSALPRPRWQALPALRERELGSSARFVYEACGARVFVQRFRLQHGLEGHTGCVNTLHFNQRGTWLASGSDDLKVVVWDWVRRQPVLDFESGHKSNVFQAKFLPNSGDSTLAMCARDGQVRVAELSATQCCKNTKRVAQHKGASHKLALEPDSPCTFLSAGEDAVVFTIDLRQDRPASKLVVTKEKEKKVGLYTIYVNPANTHQFAVGGRDQFVRIYDQRKIDENENNGVLKKFCPHHLVNSESKANITCLVYSHDGTELLASYNDEDIYLFNSSHSDGAQYVKRYKGHRNNATVKGVNFYGPKSEFVVSGSDCGHIFLWEKSSCQIIQFMEGDKGGVVNCLEPHPHLPVLATSGLDHDVKIWAPTAEASTELTGLKDVIKKNKRERDEDSLHQTDLFDSHMLWFLMHHLRQRRHHRRWREPGVGATDADSDESPSSSDTSDEEEGPDRVQCMPS.

Positions 1–24 (MSSKGSSTDGRTDLANGSLSSSPE) are enriched in polar residues. The disordered stretch occupies residues 1-147 (MSSKGSSTDG…DWVSSETSAL (147 aa)). S21 and S22 each carry phosphoserine. A Nuclear export signal motif is present at residues 39 to 50 (IEVEASDLSLSL). The span at 65–99 (RGTDTESSGEDKDSDSMEDTGHYSINDENRVHDRS) shows a compositional bias: basic and acidic residues. S99 carries the phosphoserine modification. Residues 100–112 (EEEEEEEEEEEEE) show a composition bias toward acidic residues. Residues 114–122 (PRRRVQRKR) carry the Nuclear localization signal motif. The span at 124–137 (NRDQDSSDDERALE) shows a compositional bias: basic and acidic residues. 2 positions are modified to phosphoserine: S129 and S130. 7 WD repeats span residues 191-230 (GHTG…PVLD), 234-275 (GHKS…CCKN), 281-321 (QHKG…PASK), 329-369 (EKKV…ENEN), 385-424 (ESKA…GAQY), 432-472 (RNNA…IIQF), and 476-515 (DKGG…STEL). The residue at position 204 (R204) is an Omega-N-methylarginine; by PRMT1. The segment at 558 to 597 (HRRWREPGVGATDADSDESPSSSDTSDEEEGPDRVQCMPS) is disordered.

This sequence belongs to the WD repeat DCAF8 family. In terms of assembly, interacts with DDB1, CUL4A and CUL4B. Interacts with KPNA1, KPNB1 and XPO1.

Its subcellular location is the nucleus. The protein localises to the cytoplasm. It functions in the pathway protein modification; protein ubiquitination. Functionally, may function as a substrate receptor for CUL4-DDB1 E3 ubiquitin-protein ligase complex. This chain is DDB1- and CUL4-associated factor 8 (DCAF8), found in Homo sapiens (Human).